The sequence spans 604 residues: Elongation factor 4 (604 aa).

The region spanning 7 to 189 is the tr-type G domain; that stretch reads SRIRNFSIIA…SIVHLVPPPD (183 aa). Residues 19–24 and 136–139 contribute to the GTP site; these read DHGKST and NKID.

This sequence belongs to the TRAFAC class translation factor GTPase superfamily. Classic translation factor GTPase family. LepA subfamily.

The protein localises to the cell inner membrane. The enzyme catalyses GTP + H2O = GDP + phosphate + H(+). Required for accurate and efficient protein synthesis under certain stress conditions. May act as a fidelity factor of the translation reaction, by catalyzing a one-codon backward translocation of tRNAs on improperly translocated ribosomes. Back-translocation proceeds from a post-translocation (POST) complex to a pre-translocation (PRE) complex, thus giving elongation factor G a second chance to translocate the tRNAs correctly. Binds to ribosomes in a GTP-dependent manner. In Gloeothece citriformis (strain PCC 7424) (Cyanothece sp. (strain PCC 7424)), this protein is Elongation factor 4.